A 276-amino-acid chain; its full sequence is Glutamate 5-kinase (276 aa).

An ATP-binding site is contributed by Lys-14. Positions 54, 141, and 157 each coordinate substrate. ATP-binding positions include 177–178 (SD) and 219–225 (TGGMLTK).

Belongs to the glutamate 5-kinase family.

The protein localises to the cytoplasm. The catalysed reaction is L-glutamate + ATP = L-glutamyl 5-phosphate + ADP. It functions in the pathway amino-acid biosynthesis; L-proline biosynthesis; L-glutamate 5-semialdehyde from L-glutamate: step 1/2. Its function is as follows. Catalyzes the transfer of a phosphate group to glutamate to form L-glutamate 5-phosphate. This is Glutamate 5-kinase from Listeria welshimeri serovar 6b (strain ATCC 35897 / DSM 20650 / CCUG 15529 / CIP 8149 / NCTC 11857 / SLCC 5334 / V8).